A 793-amino-acid chain; its full sequence is Caldesmon (793 aa).

Arg12 carries the post-translational modification Phosphoserine. Phosphotyrosine is present on Glu21. Disordered stretches follow at residues 26–94, 108–407, and 434–458; these read AYQR…DDEA, QKRL…IKGE, and KKQG…KPTF. Residues 26-207 are myosin and calmodulin-binding; sequence AYQRNDDDEE…PKRGSIGENQ (182 aa). The span at 47-56 shows a compositional bias: basic and acidic residues; it reads QERLRQKQEE. The span at 60 to 74 shows a compositional bias: polar residues; that stretch reads GQVTDQVEVNAQNSV. Residues 108 to 122 show a composition bias toward basic and acidic residues; the sequence is QKRLQEALERQKEFD. Ser129 carries the phosphoserine modification. Composition is skewed to basic and acidic residues over residues 146-162 and 173-188; these read TTEK…RYEI and QKND…KEDK. Residues Glu196 and Ser202 each carry the phosphoserine modification. Glycyl lysine isopeptide (Lys-Gly) (interchain with G-Cter in SUMO2) cross-links involve residues Ile203 and Glu209. Composition is skewed to basic and acidic residues over residues 236 to 407 and 435 to 458; these read EEPK…IKGE and KQGE…KPTF. 3 consecutive repeat copies span residues 319 to 332, 333 to 346, and 347 to 360. Residues 319–375 form a 3 X 14 AA tandem repeats of E-E-E-K-R-A-A-E-E-R-Q-R-I-K region; that stretch reads EEEKRAAEERQRIKEEEKRAAEERQRIKEEEKRAAEERQRIKEEEKRAAEERQRARA. Residue Lys459 forms a Glycyl lysine isopeptide (Lys-Gly) (interchain with G-Cter in SUMO2) linkage. The segment at 492–640 is disordered; that stretch reads KSQNGEFMTH…KKPFKCFTPK (149 aa). Composition is skewed to basic and acidic residues over residues 532-558 and 566-633; these read AGKR…KQKQ and EELK…DKKP. Positions 564–621 are tropomyosin-binding; sequence ELEELKKKREERRKVLEEEEQRRKQEEADRKLREEEEKRRLKEEIERRRAEAAEKRQK. At Ser643 the chain carries Phosphoserine. Residue Lys645 forms a Glycyl lysine isopeptide (Lys-Gly) (interchain with G-Cter in SUMO2) linkage. Residues 653–686 are strong actin-binding; the sequence is LNKSVQKSSGVKSTHQAAIVSKIDSRLEQYTSAI. Ser656 is modified (phosphoserine). The segment at 664-674 is tropomyosin-binding; sequence KSTHQAAIVSK. 3 disordered regions span residues 687 to 706, 721 to 740, and 747 to 793; these read EGTK…PVPA, VFSS…GLKV, and NEWL…PTKV. Positions 716-722 are calmodulin-binding; the sequence is WEKGNVF. Residues 721–733 are compositionally biased toward polar residues; that stretch reads VFSSPTAAGTPNK. Ser724 carries the post-translational modification Phosphoserine. Phosphothreonine is present on residues Thr730 and Thr753. Phosphoserine is present on Ser759. Residues 765 to 784 are compositionally biased toward basic and acidic residues; sequence SDLRPGDVSSKRNLWEKQSV. Residues 768–793 form a weak actin-binding region; sequence RPGDVSSKRNLWEKQSVDKVTSPTKV. Ser789 is subject to Phosphoserine.

This sequence belongs to the caldesmon family. Post-translationally, in non-muscle cells, phosphorylation by CDK1 during mitosis causes caldesmon to dissociate from microfilaments. Phosphorylation reduces caldesmon binding to actin, myosin, and calmodulin as well as its inhibition of actomyosin ATPase activity. Phosphorylation also occurs in both quiescent and dividing smooth muscle cells with similar effects on the interaction with actin and calmodulin and on microfilaments reorganization. CDK1-mediated phosphorylation promotes Schwann cell migration during peripheral nerve regeneration. High-molecular-weight caldesmon (isoform 1) is predominantly expressed in smooth muscles, whereas low-molecular-weight caldesmon (isoforms 2, 3, 4 and 5) are widely distributed in non-muscle tissues and cells. Not expressed in skeletal muscle or heart.

It localises to the cytoplasm. The protein localises to the cytoskeleton. It is found in the myofibril. The protein resides in the stress fiber. Actin- and myosin-binding protein implicated in the regulation of actomyosin interactions in smooth muscle and nonmuscle cells (could act as a bridge between myosin and actin filaments). Stimulates actin binding of tropomyosin which increases the stabilization of actin filament structure. In muscle tissues, inhibits the actomyosin ATPase by binding to F-actin. This inhibition is attenuated by calcium-calmodulin and is potentiated by tropomyosin. Interacts with actin, myosin, two molecules of tropomyosin and with calmodulin. Also plays an essential role during cellular mitosis and receptor capping. Involved in Schwann cell migration during peripheral nerve regeneration. This chain is Caldesmon (CALD1), found in Homo sapiens (Human).